Here is a 205-residue protein sequence, read N- to C-terminus: Macrophage immunometabolism regulator (205 aa).

The interval 1–40 (MEVDINGVNRTNNSVPSTAEGSSPSKPDPEKPRCSSTPCS) is disordered. Polar residues predominate over residues 8 to 25 (VNRTNNSVPSTAEGSSPS).

It belongs to the UNC119-binding protein family. As to quaternary structure, interacts with unc119 family proteins; interaction preferentially takes place when unc119 proteins are unliganded with myristoylated proteins.

It is found in the cytoplasm. It localises to the cell projection. The protein localises to the cilium. Functionally, may play a role in immune regulation through regulation of the macrophage function. May also play a role in trafficking of proteins via its interaction with unc119 family cargo adapters. May play a role in ciliary membrane localization. This is Macrophage immunometabolism regulator (macir) from Xenopus laevis (African clawed frog).